A 2031-amino-acid polypeptide reads, in one-letter code: Pericentriolar material 1 protein (2031 aa).

Disordered stretches follow at residues Met1 to Pro82 and Asp111 to Ser165. The segment at Met1 to Ser484 is self-association. The segment covering Arg42 to Leu58 has biased composition (basic and acidic residues). Residues Ser114–Arg130 show a composition bias toward polar residues. Basic and acidic residues predominate over residues Asn149 to Ser162. A coiled-coil region spans residues Arg302–Asp394. Positions Ser469–Asn494 are enriched in polar residues. Positions Ser469–Arg495 are disordered. Residues Ala523–Thr549 are a coiled coil. 2 disordered regions span residues Ser550–Tyr590 and Lys649–Ala678. A compositionally biased stretch (acidic residues) spans Lys562–Glu580. 2 stretches are compositionally biased toward polar residues: residues Pro581–Tyr590 and Ser667–Val677. A coiled-coil region spans residues Val684–Gly711. Residues Asp712 to Gln752 are disordered. A compositionally biased stretch (polar residues) spans Thr736 to Lys750. A self-association and localization to centrosomes region spans residues Arg745–Ala1271. Residues Leu757–Gln805 adopt a coiled-coil conformation. Polar residues-rich tracts occupy residues Leu806–Met823 and Gln888–Ser898. Disordered stretches follow at residues Leu806 to Asn835 and Ala882 to Arg1014. A coiled-coil region spans residues Ser858–Glu892. The span at Leu930 to Leu945 shows a compositional bias: acidic residues. Composition is skewed to polar residues over residues Asn960 to Arg981 and Lys1004 to Met1013. Residues Leu1025–Thr1049 are a coiled coil. Disordered regions lie at residues Gln1123 to Asn1146, Lys1219 to Arg1247, Ser1318 to Lys1345, and Pro1514 to Ser1533. Basic and acidic residues-rich tracts occupy residues Gly1127 to Gly1136 and Phe1221 to Arg1247. Positions Lys1331–Lys1345 are enriched in basic residues. Residues Gly1524–Ser1533 show a composition bias toward polar residues. Positions His1550–Gln1599 form a coiled coil. Disordered regions lie at residues Ala1746–Glu1802, Ala1817–Ile1870, Asn1922–Asp1965, and Glu2007–Ala2031. Over residues Lys1771 to Asp1784 the composition is skewed to basic and acidic residues. Over residues Gly1824–Glu1835 the composition is skewed to acidic residues. Composition is skewed to polar residues over residues Val1843 to Glu1852 and Asn1922 to Glu1942.

This sequence belongs to the PCM1 family. As to quaternary structure, self-associates. Interacts with cetn3.

The protein localises to the cytoplasm. Its subcellular location is the cytoskeleton. The protein resides in the microtubule organizing center. It localises to the centrosome. It is found in the cytoplasmic granule. The protein localises to the centriolar satellite. Its subcellular location is the cilium basal body. In terms of biological role, required to anchor microtubules to the centrosome. Required for centrosome assembly and function. Essential for the correct localization of several centrosomal proteins including cetn3 and pcnt. Probably involved in the biogenesis of cilia. This chain is Pericentriolar material 1 protein (pcm1), found in Xenopus laevis (African clawed frog).